The primary structure comprises 114 residues: UPF0145 protein TTHA1944 (114 aa).

Belongs to the UPF0145 family.

This chain is UPF0145 protein TTHA1944, found in Thermus thermophilus (strain ATCC 27634 / DSM 579 / HB8).